The primary structure comprises 382 residues: Low-specificity L-threonine aldolase (382 aa).

Lysine 214 carries the N6-(pyridoxal phosphate)lysine modification.

This sequence belongs to the threonine aldolase family. As to quaternary structure, homotetramer. Pyridoxal 5'-phosphate is required as a cofactor.

It carries out the reaction L-threonine = acetaldehyde + glycine. The catalysed reaction is L-allo-threonine = acetaldehyde + glycine. It functions in the pathway amino-acid degradation; L-threonine degradation via aldolase pathway; acetaldehyde and glycine from L-threonine: step 1/1. The sequence is that of Low-specificity L-threonine aldolase (GLY1) from Eremothecium gossypii (strain ATCC 10895 / CBS 109.51 / FGSC 9923 / NRRL Y-1056) (Yeast).